Consider the following 361-residue polypeptide: MSSTANNPQINSDEEENFLFAMQLASASVLPMVLKSAIELDLLELIKKAGAGAFVSPAELAAQLLTTNAEAHVMLDRILRLLTSYAILECRLKTLPDGGVQRLYGLAPVCKFLTKNEDGVSMAPLALMNQDKVLMESWYHLKDAVLDGGIPFNKAYGMTAFEYHGTDPRFNKVFNQGMSNHSTITMKKILETYTGFDGLKTVVDVGGGTGATLNMIISKYPSIKGINFDLPHVVEDAPSYPGVEHVGGDMFVSVPKGDAIFMKWICHDWSDAHCVKFLKKCYEALPENGKVILAECVLPEAPDTGLATKNVVHIDVIMLAHNPGGKERTEKEFQVLAKASGFKQFNKVCCAYNSWIMELLK.

128–134 (MNQDKVL) is a binding site for substrate. Residues 160-178 (AFEYHGTDPRFNKVFNQGM) are substrate binding. Residues Gly-206, Asp-229, Asp-249, Met-250, and Lys-263 each contribute to the S-adenosyl-L-methionine site. The Proton acceptor role is filled by His-267.

The protein belongs to the class I-like SAM-binding methyltransferase superfamily. Cation-independent O-methyltransferase family. COMT subfamily. Homodimer.

The catalysed reaction is (E)-caffeate + S-adenosyl-L-methionine = (E)-ferulate + S-adenosyl-L-homocysteine + H(+). It participates in aromatic compound metabolism; phenylpropanoid biosynthesis. In terms of biological role, catalyzes the conversion of caffeic acid to ferulic acid and of 5-hydroxyferulic acid to sinapic acid. The resulting products may subsequently be converted to the corresponding alcohols that are incorporated into lignins. In Ocimum basilicum (Sweet basil), this protein is Caffeic acid 3-O-methyltransferase 2 (COMT2).